Here is a 122-residue protein sequence, read N- to C-terminus: Large ribosomal subunit protein uL14 (122 aa).

This sequence belongs to the universal ribosomal protein uL14 family. In terms of assembly, part of the 50S ribosomal subunit. Forms a cluster with proteins L3 and L19. In the 70S ribosome, L14 and L19 interact and together make contacts with the 16S rRNA in bridges B5 and B8.

Functionally, binds to 23S rRNA. Forms part of two intersubunit bridges in the 70S ribosome. This Chlorobium phaeobacteroides (strain DSM 266 / SMG 266 / 2430) protein is Large ribosomal subunit protein uL14.